The chain runs to 172 residues: Transcriptional regulator TAC1 (172 aa).

A disordered region spans residues 1–28 (MENIKNPKNADDCSDSISKNSHQGVDDS). Residues 15–28 (DSISKNSHQGVDDS) show a composition bias toward polar residues. The C2H2-type zinc-finger motif lies at 35–57 (YVCSFCIRGFSNAQALGGHMNIH). The short motif at 156-160 (LDLEL) is the EAR-like (transcriptional repression) element.

As to expression, preferentially expressed in roots and flowers. Slightly expressed in leaves and stems.

The protein resides in the nucleus. Activation factor which mediates telomerase activity and potentiates responses to auxin through the regulation of BT2. Binds in vitro to the DNA sequence 5'-GACAGTGTTAC-3' of the BT2 promoter. The polypeptide is Transcriptional regulator TAC1 (TAC1) (Arabidopsis thaliana (Mouse-ear cress)).